The primary structure comprises 366 residues: MQYINIANRGVKSLSPYQAGKPIEELERELGISNIVKLASNENPFGFPESAKKAIFEQLDKLTRYPDANGFELKQTIAKKFGVQPNQITLGNGSNDLLELFAHTFATEGDEIMYSQYAFIVYPLVTKAINAIVKEIPAKNWGHDLQGFLTALSDKTKLIYIANPNNPTGNFLTSQEIEDFLAEVPENVIVVLDEAYTEFTRSEERVDSFSLLKKYSNLIISRSLSKAYGLAGLRIGYAVSNPEIADLLNRVRQPFNCNSLALTAAVAVMNDDKFVEKVAENNRIEMRRYEDFCQKNQLDYIPSKGNFITIDFKQPAAPIYDALLREGVIVRPIAGYGMPNHLRISIGLPEENDKFFTALSKVLKFA.

K226 bears the N6-(pyridoxal phosphate)lysine mark.

The protein belongs to the class-II pyridoxal-phosphate-dependent aminotransferase family. Histidinol-phosphate aminotransferase subfamily. In terms of assembly, homodimer. Pyridoxal 5'-phosphate is required as a cofactor.

It carries out the reaction L-histidinol phosphate + 2-oxoglutarate = 3-(imidazol-4-yl)-2-oxopropyl phosphate + L-glutamate. Its pathway is amino-acid biosynthesis; L-histidine biosynthesis; L-histidine from 5-phospho-alpha-D-ribose 1-diphosphate: step 7/9. This is Histidinol-phosphate aminotransferase 2 (hisC2) from Haemophilus influenzae (strain ATCC 51907 / DSM 11121 / KW20 / Rd).